The primary structure comprises 424 residues: Ribulose bisphosphate carboxylase (424 aa).

Lysine 159 serves as the catalytic Proton acceptor. Lysine 161 contributes to the substrate binding site. Mg(2+) is bound by residues lysine 185, aspartate 187, and glutamate 188. An N6-carboxylysine modification is found at lysine 185. Histidine 277 (proton acceptor) is an active-site residue. Substrate-binding positions include arginine 278, histidine 310, 347–349, and 369–372; these read SGG and QAGG.

It belongs to the RuBisCO large chain family. Type III subfamily. As to quaternary structure, homodimer or homodecamer. In contrast to form I RuBisCO, the form III RuBisCO is composed solely of large subunits. Mg(2+) is required as a cofactor.

It carries out the reaction 2 (2R)-3-phosphoglycerate + 2 H(+) = D-ribulose 1,5-bisphosphate + CO2 + H2O. The enzyme catalyses D-ribulose 1,5-bisphosphate + O2 = 2-phosphoglycolate + (2R)-3-phosphoglycerate + 2 H(+). Catalyzes the addition of molecular CO(2) and H(2)O to ribulose 1,5-bisphosphate (RuBP), generating two molecules of 3-phosphoglycerate (3-PGA). Functions in an archaeal AMP degradation pathway, together with AMP phosphorylase and R15P isomerase. This Pyrococcus abyssi (strain GE5 / Orsay) protein is Ribulose bisphosphate carboxylase.